The primary structure comprises 421 residues: Nuclear speckle RNA-binding protein B (421 aa).

Disordered regions lie at residues 1 to 64, 86 to 114, and 197 to 226; these read MDNR…VNIY, TGQTSTSTTSSSSSSSTSEPKDTSTMVDT, and TDPQEGTPYLIPSGDMHSYLSQDEDRGIPH. The segment covering 33 to 44 has biased composition (pro residues); sequence PLAPPHPQPQPP. Residues 89-103 show a composition bias toward low complexity; the sequence is TSTSTTSSSSSSSTS. The 87-residue stretch at 323–409 folds into the RRM domain; the sequence is NTLYVEGLPS…KILRLQFFRN (87 aa).

In terms of tissue distribution, isoform 1: Expressed in root meristems, lateral root primordia, root vascular tissues and cotyledon vascular tissues. Isoform 2: Expressed in root meristems, lateral root primordia and root vascular tissues.

The protein localises to the nucleus speckle. Its function is as follows. Alternative splicing (AS) regulator that binds to specific mRNAs and modulates auxin effects on the transcriptome. Displaced from its targets upon binding to AS competitor long non-coding RNA (ASCO-RNA). The polypeptide is Nuclear speckle RNA-binding protein B (Arabidopsis thaliana (Mouse-ear cress)).